Consider the following 116-residue polypeptide: Large ribosomal subunit protein uL18 (116 aa).

This sequence belongs to the universal ribosomal protein uL18 family. Part of the 50S ribosomal subunit; part of the 5S rRNA/L5/L18/L25 subcomplex. Contacts the 5S and 23S rRNAs.

Functionally, this is one of the proteins that bind and probably mediate the attachment of the 5S RNA into the large ribosomal subunit, where it forms part of the central protuberance. The protein is Large ribosomal subunit protein uL18 of Shewanella frigidimarina (strain NCIMB 400).